Reading from the N-terminus, the 498-residue chain is MVVKKYIVALDQGTTSSRAIVFDHQANIVAVAQREFTQHYPQAGWVEHDPMEIWSSQSSALVEVLTRAGISRHDVAAIGITNQRETTIVWNKHTGKPVCNAIVWQCRRSQAICLDLKAQGVEDLVRQKTGLVLDPYFSASKIKWILDNVEGAREQAEAGDLLFGTVDTWLVWKLTQGEVHVTEPTNASRTMLFNIHTQEWDEELLDLFNIPRAMLPEVKPSCAIYGYTELAGNHIPVAGMAGDQQSALFGQLCIEPGMAKNTYGTGCFLLMNTGDKAVESTHGLLTTIAIGADTKVNYALEGSVFMGGAVIQWLRDELGLITDACDTQYFADKVDDTNGVYLVPAFVGLGAPYWDADARGAIIGLTRGANRNHIIRAALEAIAYQSRDVLDAMSKDSNVPLTQIRVDGGAVANDFLMQFQADITGVTVIRPQVTETTAMGAAFLAGLAVGVWKSTDELKTMLSTEREFTSTMDITTRATLYKGWQKAVSQVSPNGDVG.

An ADP-binding site is contributed by Thr-14. 3 residues coordinate ATP: Thr-14, Thr-15, and Ser-16. Position 14 (Thr-14) interacts with sn-glycerol 3-phosphate. Arg-18 is a binding site for ADP. Sn-glycerol 3-phosphate contacts are provided by Arg-84, Glu-85, Tyr-136, and Asp-243. Residues Arg-84, Glu-85, Tyr-136, Asp-243, and Gln-244 each contribute to the glycerol site. The ADP site is built by Thr-265 and Gly-308. Thr-265, Gly-308, Gln-312, and Gly-409 together coordinate ATP. Gly-409 and Asn-413 together coordinate ADP.

The protein belongs to the FGGY kinase family.

The enzyme catalyses glycerol + ATP = sn-glycerol 3-phosphate + ADP + H(+). It functions in the pathway polyol metabolism; glycerol degradation via glycerol kinase pathway; sn-glycerol 3-phosphate from glycerol: step 1/1. With respect to regulation, inhibited by fructose 1,6-bisphosphate (FBP). In terms of biological role, key enzyme in the regulation of glycerol uptake and metabolism. Catalyzes the phosphorylation of glycerol to yield sn-glycerol 3-phosphate. The sequence is that of Glycerol kinase from Shewanella frigidimarina (strain NCIMB 400).